The primary structure comprises 389 residues: Chalcone synthase E (389 aa).

C164 is an active-site residue.

This sequence belongs to the thiolase-like superfamily. Chalcone/stilbene synthases family.

It carries out the reaction (E)-4-coumaroyl-CoA + 3 malonyl-CoA + 3 H(+) = 2',4,4',6'-tetrahydroxychalcone + 3 CO2 + 4 CoA. It participates in secondary metabolite biosynthesis; flavonoid biosynthesis. Functionally, the primary product of this enzyme is 4,2',4',6'-tetrahydroxychalcone (also termed naringenin-chalcone or chalcone) which can under specific conditions spontaneously isomerize into naringenin. The chain is Chalcone synthase E (CHSE) from Ipomoea nil (Japanese morning glory).